The chain runs to 113 residues: Ribonuclease P protein component (113 aa).

Belongs to the RnpA family. As to quaternary structure, consists of a catalytic RNA component (M1 or rnpB) and a protein subunit.

The catalysed reaction is Endonucleolytic cleavage of RNA, removing 5'-extranucleotides from tRNA precursor.. RNaseP catalyzes the removal of the 5'-leader sequence from pre-tRNA to produce the mature 5'-terminus. It can also cleave other RNA substrates such as 4.5S RNA. The protein component plays an auxiliary but essential role in vivo by binding to the 5'-leader sequence and broadening the substrate specificity of the ribozyme. This is Ribonuclease P protein component from Desulforamulus reducens (strain ATCC BAA-1160 / DSM 100696 / MI-1) (Desulfotomaculum reducens).